The following is a 130-amino-acid chain: Small ribosomal subunit protein uS9 (130 aa).

The protein belongs to the universal ribosomal protein uS9 family.

This Streptococcus mutans serotype c (strain ATCC 700610 / UA159) protein is Small ribosomal subunit protein uS9.